We begin with the raw amino-acid sequence, 251 residues long: 5-oxoprolinase subunit A 2 (251 aa).

The protein belongs to the LamB/PxpA family. As to quaternary structure, forms a complex composed of PxpA, PxpB and PxpC.

The catalysed reaction is 5-oxo-L-proline + ATP + 2 H2O = L-glutamate + ADP + phosphate + H(+). Functionally, catalyzes the cleavage of 5-oxoproline to form L-glutamate coupled to the hydrolysis of ATP to ADP and inorganic phosphate. In Pseudomonas syringae pv. tomato (strain ATCC BAA-871 / DC3000), this protein is 5-oxoprolinase subunit A 2.